The sequence spans 292 residues: 4-hydroxy-tetrahydrodipicolinate synthase (292 aa).

Residue T45 participates in pyruvate binding. The Proton donor/acceptor role is filled by Y133. The Schiff-base intermediate with substrate role is filled by K161. A pyruvate-binding site is contributed by I203.

The protein belongs to the DapA family. As to quaternary structure, homodimer.

Its subcellular location is the cytoplasm. It carries out the reaction L-aspartate 4-semialdehyde + pyruvate = (2S,4S)-4-hydroxy-2,3,4,5-tetrahydrodipicolinate + H2O + H(+). It functions in the pathway amino-acid biosynthesis; L-lysine biosynthesis via DAP pathway; (S)-tetrahydrodipicolinate from L-aspartate: step 3/4. In terms of biological role, catalyzes the condensation of (S)-aspartate-beta-semialdehyde [(S)-ASA] and pyruvate to 4-hydroxy-tetrahydrodipicolinate (HTPA). This chain is 4-hydroxy-tetrahydrodipicolinate synthase, found in Pseudomonas savastanoi pv. phaseolicola (strain 1448A / Race 6) (Pseudomonas syringae pv. phaseolicola (strain 1448A / Race 6)).